The chain runs to 959 residues: DNA-directed RNA polymerase subunit beta'' (959 aa).

4 residues coordinate Zn(2+): Cys-211, Cys-288, Cys-295, and Cys-298.

Belongs to the RNA polymerase beta' chain family. RpoC2 subfamily. As to quaternary structure, in plastids the minimal PEP RNA polymerase catalytic core is composed of four subunits: alpha, beta, beta', and beta''. When a (nuclear-encoded) sigma factor is associated with the core the holoenzyme is formed, which can initiate transcription. The cofactor is Zn(2+).

The protein localises to the plastid. It is found in the apicoplast. It carries out the reaction RNA(n) + a ribonucleoside 5'-triphosphate = RNA(n+1) + diphosphate. In terms of biological role, DNA-dependent RNA polymerase catalyzes the transcription of DNA into RNA using the four ribonucleoside triphosphates as substrates. The polypeptide is DNA-directed RNA polymerase subunit beta'' (Plasmodium falciparum (isolate 3D7)).